Reading from the N-terminus, the 443-residue chain is MLDITLLRKDLASAVAGLEKRKKNQPYLDVSAFTALEAERKTLQTRTEEIQARRNALNKQIGPLKAKGEPVDALMAEVNALKAEQESQSARLDQIQPELQALLLAVPNLPHVSVPVGEDEAGNVEMRRWSPQGGAGANAAPLPFAAKDHVDLGAPLGLDFEMGAKLAGSRFTVMKGPIARLHRALAQFMLDIQTEKHGYAECYVPYIVNAATLSGTGQLPKFEGDLFAAKKGGQEGEPAPDHSALYLIPTSEVPLTNFVRDEVVAEAQLPIKLTAHTPCFRSEAGSAGRDTRGMIRQHQFDKVEMVQIVHPEKSYDALEQMTGHAEAVLQALELPYRVVLLCTGDMGFGATKTYDLEVWLPAQNTYREISSVSNCEAFQARRLQARFKNAQGKNELVHTLNGSGLAVGRTLVAVLENHQNEDGSINVPAALRPYLGGLELLRG.

Residue T250–E252 participates in L-serine binding. R281–E283 serves as a coordination point for ATP. E304 is an L-serine binding site. E368 to S371 is a binding site for ATP. An L-serine-binding site is contributed by S403.

This sequence belongs to the class-II aminoacyl-tRNA synthetase family. Type-1 seryl-tRNA synthetase subfamily. In terms of assembly, homodimer. The tRNA molecule binds across the dimer.

The protein resides in the cytoplasm. It carries out the reaction tRNA(Ser) + L-serine + ATP = L-seryl-tRNA(Ser) + AMP + diphosphate + H(+). It catalyses the reaction tRNA(Sec) + L-serine + ATP = L-seryl-tRNA(Sec) + AMP + diphosphate + H(+). The protein operates within aminoacyl-tRNA biosynthesis; selenocysteinyl-tRNA(Sec) biosynthesis; L-seryl-tRNA(Sec) from L-serine and tRNA(Sec): step 1/1. Catalyzes the attachment of serine to tRNA(Ser). Is also able to aminoacylate tRNA(Sec) with serine, to form the misacylated tRNA L-seryl-tRNA(Sec), which will be further converted into selenocysteinyl-tRNA(Sec). The polypeptide is Serine--tRNA ligase (Variovorax paradoxus (strain S110)).